Here is a 127-residue protein sequence, read N- to C-terminus: Histone H2A (127 aa).

Positions 1 to 20 (MSGRGKGGKAKTGGKAKSRS) are enriched in basic residues. Residues 1-23 (MSGRGKGGKAKTGGKAKSRSSRA) are disordered. Serine 2 is subject to N-acetylserine. The residue at position 2 (serine 2) is a Phosphoserine. N6-acetyllysine; partial occurs at positions 6, 9, and 11. N5-methylglutamine is present on glutamine 106. Lysine 121 is covalently cross-linked (Glycyl lysine isopeptide (Lys-Gly) (interchain with G-Cter in ubiquitin)).

It belongs to the histone H2A family. In terms of assembly, the nucleosome is a histone octamer containing two molecules each of H2A, H2B, H3 and H4 assembled in one H3-H4 heterotetramer and two H2A-H2B heterodimers. The octamer wraps approximately 147 bp of DNA. Post-translationally, monoubiquitination of Lys-121 gives a specific tag for epigenetic transcriptional repression. In terms of processing, phosphorylation on Ser-2 is enhanced during mitosis. Phosphorylation on Ser-2 directly represses transcription.

The protein resides in the nucleus. The protein localises to the chromosome. Its function is as follows. Core component of nucleosome. Nucleosomes wrap and compact DNA into chromatin, limiting DNA accessibility to the cellular machineries which require DNA as a template. Histones thereby play a central role in transcription regulation, DNA repair, DNA replication and chromosomal stability. DNA accessibility is regulated via a complex set of post-translational modifications of histones, also called histone code, and nucleosome remodeling. The chain is Histone H2A (his-3) from Caenorhabditis elegans.